Consider the following 326-residue polypeptide: Beta-ketoacyl-[acyl-carrier-protein] synthase III (326 aa).

Residues Cys-120 and His-253 contribute to the active site. Residues Gln-254–Arg-258 are ACP-binding. The active site involves Asn-283.

The protein belongs to the thiolase-like superfamily. FabH family. As to quaternary structure, homodimer.

It is found in the cytoplasm. The enzyme catalyses malonyl-[ACP] + acetyl-CoA + H(+) = 3-oxobutanoyl-[ACP] + CO2 + CoA. The protein operates within lipid metabolism; fatty acid biosynthesis. Functionally, catalyzes the condensation reaction of fatty acid synthesis by the addition to an acyl acceptor of two carbons from malonyl-ACP. Catalyzes the first condensation reaction which initiates fatty acid synthesis and may therefore play a role in governing the total rate of fatty acid production. Possesses both acetoacetyl-ACP synthase and acetyl transacylase activities. Its substrate specificity determines the biosynthesis of branched-chain and/or straight-chain of fatty acids. This is Beta-ketoacyl-[acyl-carrier-protein] synthase III from Cupriavidus pinatubonensis (strain JMP 134 / LMG 1197) (Cupriavidus necator (strain JMP 134)).